The chain runs to 172 residues: Caltractin (172 aa).

The interval 1–23 is disordered; it reads MQKYGSKKIGATSATSSNKQKVQ. The segment covering 12 to 21 has biased composition (polar residues); that stretch reads TSATSSNKQK. EF-hand domains follow at residues 29 to 64, 65 to 99, 101 to 136, and 137 to 172; these read EQRQ…LGFE, PKKE…KMSE, DSHA…LGEN, and MTDE…TNLF. Ca(2+)-binding residues include Asp-42, Asp-44, Ser-46, Lys-48, and Glu-53.

Belongs to the centrin family. In terms of assembly, monomer.

Its subcellular location is the cytoplasm. It is found in the cytoskeleton. The protein resides in the microtubule organizing center. It localises to the centrosome. Plays a fundamental role in microtubule-organizing center structure and function. This Naegleria gruberi (Amoeba) protein is Caltractin (CTN).